A 1378-amino-acid chain; its full sequence is MSLERELRQLSKAKAKAQRAGQRREEAALCHQLGELLAGHGRYAEALEQHWQELQLRERADDPLGCAVAHRKIGERLAEMEDYPAALQHQHQYLELAHSLRNHTELQRAWATIGRTHLDIYDHCQSRDALLQAQAAFEKSLAIVDEELEGTLAQGELNEMRTRLYLNLGLTFESLQQTALCNDYFRKSIFLAEQNHLYEDLFRARYNLGTIHWRAGQHSQAMRCLEGARECAHTMRKRFMESECCVVIAQVLQDLGDFLAAKRALKKAYRLGSQKPVQRAAICQNLQHVLAVVRLQQQLEEAEGRDPQGAMVICEQLGDLFSKAGDFPRAAEAYQKQLRFAELLDRPGAERAIIHVSLATTLGDMKDHHGAVRHYEEELRLRSGNVLEEAKTWLNIALSREEAGDAYELLAPCFQKALSCAQQAQRPQLQRQVLQHLHTVQLRLQPQEAPETETRLRELSVAEDEDEEEEAEEAAATAESEALEAGEVELSEGEDDTDGLTPQLEEDEELQGHLGRRKGSKWNRRNDMGETLLHRACIEGQLRRVQDLVRQGHPLNPRDYCGWTPLHEACNYGHLEIVRFLLDHGAAVDDPGGQGCEGITPLHDALNCGHFEVAELLLERGASVTLRTRKGLSPLETLQQWVKLYRRDLDLETRQKARAMEMLLQAAASGQDPHSSQAFHTPSSLLFDPETSPPLSPCPEPPSNSTRLPEASQAHVRVSPGQAAPAMARPRRSRHGPASSSSSSEGEDSAGPARPSQKRPRCSATAQRVAAWTPGPASNREAATASTSRAAYQAAIRGVGSAQSRLGPGPPRGHSKALAPQAALIPEEECLAGDWLELDMPLTRSRRPRPRGTGDNRRPSSTSGSDSEESRPRARAKQVRLTCMQSCSAPVNAGPSSLASEPPGSPSTPRVSEPSGDSSAAGQPLGPAPPPPIRVRVQVQDHLFLIPVPHSSDTHSVAWLAEQAAQRYYQTCGLLPRLTLRKEGALLAPQDLIPDVLQSNDEVLAEVTSWDLPPLTDRYRRACQSLGQGEHQQVLQAVELQGLGLSFSACSLALDQAQLTPLLRALKLHTALRELRLAGNRLGDKCVAELVAALGTMPSLALLDLSSNHLGPEGLRQLAMGLPGQATLQSLEELDLSMNPLGDGCGQSLASLLHACPLLSTLRLQACGFGPSFFLSHQTALGSAFQDAEHLKTLSLSYNALGAPALARTLQSLPAGTLLHLELSSVAAGKGDSDLMEPVFRYLAKEGCALAHLTLSANHLGDKAVRDLCRCLSLCPSLISLDLSANPEISCASLEELLSTLQKRPQGLSFLGLSGCAVQGPLGLGLWDKIAAQLRELQLCSRRLCAEDRDALRQLQPSRPGPGECTLDHGSKLFFRRL.

8 TPR repeats span residues 27–60, 67–100, 107–147, 162–195, 202–235, 242–275, 311–344, and 352–385; these read AALCHQLGELLAGHGRYAEALEQHWQELQLRERA, AVAHRKIGERLAEMEDYPAALQHQHQYLELAHSL, QRAW…VDEE, TRLYLNLGLTFESLQQTALCNDYFRKSIFLAEQN, FRARYNLGTIHWRAGQHSQAMRCLEGARECAHTM, SECCVVIAQVLQDLGDFLAAKRALKKAYRLGSQK, MVICEQLGDLFSKAGDFPRAAEAYQKQLRFAELL, and AIIHVSLATTLGDMKDHHGAVRHYEEELRLRSGN. The tract at residues 475-524 is disordered; that stretch reads AATAESEALEAGEVELSEGEDDTDGLTPQLEEDEELQGHLGRRKGSKWNR. Acidic residues predominate over residues 481–509; that stretch reads EALEAGEVELSEGEDDTDGLTPQLEEDEE. Residues 514–523 show a composition bias toward basic residues; that stretch reads LGRRKGSKWN. 3 ANK repeats span residues 528-557, 561-590, and 597-626; these read MGETLLHRACIEGQLRRVQDLVRQGHPLNP, CGWTPLHEACNYGHLEIVRFLLDHGAAVDD, and EGITPLHDALNCGHFEVAELLLERGASVTL. Residues 667 to 789 form a disordered region; that stretch reads AASGQDPHSS…REAATASTSR (123 aa). The span at 672-684 shows a compositional bias: polar residues; the sequence is DPHSSQAFHTPSS. Residues 691–702 show a composition bias toward pro residues; sequence TSPPLSPCPEPP. Serine 719 is modified (phosphoserine). 2 stretches are compositionally biased toward low complexity: residues 736-753 and 777-789; these read GPASSSSSSEGEDSAGPA and ASNREAATASTSR. The residue at position 797 (arginine 797) is an Omega-N-methylarginine. The segment at 842 to 933 is disordered; sequence LTRSRRPRPR…PLGPAPPPPI (92 aa). 2 stretches are compositionally biased toward polar residues: residues 883 to 899 and 907 to 918; these read CMQSCSAPVNAGPSSLA and STPRVSEPSGDS. 7 LRR repeats span residues 1069-1093, 1097-1122, 1128-1151, 1188-1212, 1247-1270, 1275-1300, and 1331-1354; these read HTALRELRLAGNRLGDKCVAELVAA, MPSLALLDLSSNHLGPEGLRQLAMGL, LQSLEELDLSMNPLGDGCGQSLAS, AEHLKTLSLSYNALGAPALARTLQS, GCALAHLTLSANHLGDKAVRDLCR, CPSLISLDLSANPEISCASLEELLST, and AAQLRELQLCSRRLCAEDRDALRQ.

This sequence belongs to the Tonsoku family. As to quaternary structure, component of the MMS22L-TONSL complex, a complex at least composed of MMS22L and TONSL/NFKBIL2. Interacts with the MCM complex, the FACT complex and the RPA complex. Interacts with MCM5; the interaction is direct. Binds histones, with a strong preference for histone H3.1 (histones H3.1 and H3-4/H3.1t). Interacts (via ANK repeats) with histone H4; specifically binds histone H4 lacking methylation at 'Lys-20' (H4K20me0). May interact with DNAJC9; the interaction seems to be histone-dependent. As to expression, expressed in heart, skeletal muscle and tracheal epithelial cells.

It localises to the nucleus. The protein resides in the chromosome. The protein localises to the cytoplasm. Functionally, component of the MMS22L-TONSL complex, a complex that promotes homologous recombination-mediated repair of double-strand breaks (DSBs) at stalled or collapsed replication forks. The MMS22L-TONSL complex is required to maintain genome integrity during DNA replication. It mediates the assembly of RAD51 filaments on single-stranded DNA (ssDNA): the MMS22L-TONSL complex is recruited to DSBs following histone replacement by histone chaperones and eviction of the replication protein A complex (RPA/RP-A) from DSBs. Following recruitment to DSBs, the TONSL-MMS22L complex promotes recruitment of RAD51 filaments and subsequent homologous recombination. Within the complex, TONSL acts as a histone reader, which recognizes and binds newly synthesized histones following their replacement by histone chaperones. Specifically binds histone H4 lacking methylation at 'Lys-20' (H4K20me0) and histone H3.1. This chain is Tonsoku-like protein, found in Homo sapiens (Human).